We begin with the raw amino-acid sequence, 266 residues long: Gasdermin bGSDM (266 aa).

The next 4 membrane-spanning stretches (beta stranded) occupy residues 67–83 (LQQN…GVDI), 95–113 (KLRG…ISYQ), 162–179 (SFSV…DLEA), and 187–203 (ADVN…LMEY).

The protein belongs to the bacterial gasdermin family. Monomer. As to quaternary structure, forms large, homooligomeric ring-shaped pores when inserted in membranes.

It is found in the cytoplasm. Its subcellular location is the cell inner membrane. The full-length protein before cleavage is inactive: intramolecular interactions between the N-terminal domain and the C-terminal region mediate autoinhibition. The pyroptosis-like-inducing activity is carried by the released N-terminal domain (Gasdermin bGSDM, N-terminus). Functionally, precursor of a pore-forming protein involved in defense against bacteriophages. Expression of bGSDM and the neighboring protease gene (Gilli_2517) is not toxic in E.coli. Cleavage of this precursor by its dedicated protease releases the active moiety (gasdermin bGSDM, N-terminus) which inserts into membranes, forming pores and triggering cell death. Pore-forming protein that causes membrane permeabilization via a pyroptosis-like activity. Makes ring-like pores when released. The protein is Gasdermin bGSDM of Gillisia limnaea (strain DSM 15749 / LMG 21470 / R-8282).